The chain runs to 614 residues: V-type proton ATPase catalytic subunit A isoform 2 (614 aa).

Ser-142 carries the phosphoserine modification. 247–254 (GAFGCGKT) serves as a coordination point for ATP.

Belongs to the ATPase alpha/beta chains family. In terms of assembly, V-ATPase is a heteromultimeric enzyme made up of two complexes: the ATP-hydrolytic V1 complex and the proton translocation V0 complex. The V1 complex consists of three catalytic AB heterodimers that form a heterohexamer, three peripheral stalks each consisting of EG heterodimers, one central rotor including subunits D and F, and the regulatory subunits C and H. The proton translocation complex V0 consists of the proton transport subunit a, a ring of proteolipid subunits c9c'', rotary subunit d, subunits e and f, and the accessory subunits VhaAC45 and ATP6AP2.

The catalysed reaction is ATP + H2O + 4 H(+)(in) = ADP + phosphate + 5 H(+)(out). Its activity is regulated as follows. ATP hydrolysis occurs at the interface between the nucleotide-binding domains of subunits A and B. ATP hydrolysis triggers a conformational change in the subunits D and F, which induces a shift of subunit d. The c-ring is subsequently rotated and results in a continuous proton translocation across the membrane. Functionally, catalytic subunit of the V1 complex of vacuolar(H+)-ATPase (V-ATPase), a multisubunit enzyme composed of a peripheral complex (V1) that hydrolyzes ATP and a membrane integral complex (V0) that translocates protons. V-ATPase is responsible for acidifying and maintaining the pH of intracellular compartments and in some cell types, is targeted to the plasma membrane, where it is responsible for acidifying the extracellular environment. The protein is V-type proton ATPase catalytic subunit A isoform 2 (Vha68-2) of Drosophila melanogaster (Fruit fly).